A 132-amino-acid chain; its full sequence is Small ribosomal subunit protein uS11 (132 aa).

Belongs to the universal ribosomal protein uS11 family. Part of the 30S ribosomal subunit. Interacts with proteins S7 and S18. Binds to IF-3.

Its function is as follows. Located on the platform of the 30S subunit, it bridges several disparate RNA helices of the 16S rRNA. Forms part of the Shine-Dalgarno cleft in the 70S ribosome. This is Small ribosomal subunit protein uS11 from Oenococcus oeni (strain ATCC BAA-331 / PSU-1).